Reading from the N-terminus, the 410-residue chain is Ribosomal protein S6 kinase-related protein (410 aa).

Residues 107 to 274 form the Protein kinase domain; that stretch reads LKILGLVAKG…GTLQYMAPEV (168 aa). Residues 113–121 and K136 each bind ATP; that span reads VAKGSFGTV. The Proton acceptor role is filled by D229.

Belongs to the protein kinase superfamily. Ser/Thr protein kinase family.

The catalysed reaction is L-seryl-[protein] + ATP = O-phospho-L-seryl-[protein] + ADP + H(+). It carries out the reaction L-threonyl-[protein] + ATP = O-phospho-L-threonyl-[protein] + ADP + H(+). The polypeptide is Ribosomal protein S6 kinase-related protein (Homo sapiens (Human)).